The sequence spans 593 residues: Methionine--tRNA ligase, mitochondrial (593 aa).

A mitochondrion-targeting transit peptide spans 1–29; it reads MLRTSVLRLLGRTGASRLSLLEDFGPRYY. Positions 52–62 match the 'HIGH' region motif; it reads FYVNAAPHIGH. The 'KMSKS' region signature appears at 347–351; that stretch reads KMSKS. Residue Lys350 coordinates ATP.

Belongs to the class-I aminoacyl-tRNA synthetase family.

The protein resides in the mitochondrion matrix. It catalyses the reaction tRNA(Met) + L-methionine + ATP = L-methionyl-tRNA(Met) + AMP + diphosphate. This Homo sapiens (Human) protein is Methionine--tRNA ligase, mitochondrial (MARS2).